A 145-amino-acid chain; its full sequence is 3-hydroxyacyl-[acyl-carrier-protein] dehydratase FabZ (145 aa).

The active site involves His50.

The protein belongs to the thioester dehydratase family. FabZ subfamily.

Its subcellular location is the cytoplasm. The enzyme catalyses a (3R)-hydroxyacyl-[ACP] = a (2E)-enoyl-[ACP] + H2O. Functionally, involved in unsaturated fatty acids biosynthesis. Catalyzes the dehydration of short chain beta-hydroxyacyl-ACPs and long chain saturated and unsaturated beta-hydroxyacyl-ACPs. In Coxiella burnetii (strain CbuK_Q154) (Coxiella burnetii (strain Q154)), this protein is 3-hydroxyacyl-[acyl-carrier-protein] dehydratase FabZ.